Reading from the N-terminus, the 590-residue chain is Neuronal PAS domain-containing protein 1 (590 aa).

One can recognise a bHLH domain in the interval 45–98 (QRKEKSRNAARSRRGKENLEFFELAKLLPLPGAISSQLDKASIVRLSVTYLRLR). Positions 135 to 207 (EQHLGGHILQ…LGLRTPTPGP (73 aa)) constitute a PAS 1 domain. Positions 198–229 (LGLRTPTPGPPTPPSVSSSSSSSSSLADTPEI) are disordered. Positions 212–222 (SVSSSSSSSSS) are enriched in low complexity. One can recognise a PAS 2 domain in the interval 293–359 (APLAELPLHG…IRQSHVDLLD (67 aa)). Residues 365–408 (TGYYRWLQRAGGFVWLQSVATVAGSGKSPGEHHVLWVSHVLSQA) enclose the PAC domain. The interval 425 to 494 (ACEEASSPGP…SHPATPRPEF (70 aa)) is disordered. Positions 433-442 (GPEPTEPEPP) are enriched in pro residues. The span at 463–476 (IKVEPGPRETKGSE) shows a compositional bias: basic and acidic residues.

As to quaternary structure, efficient DNA binding requires dimerization with another bHLH protein. Interacts with ARNT; forms a heterodimer that binds core DNA sequence 5'-[AG]CGTG-3' within the hypoxia response element (HRE) leading to a transcriptional repressor on its target gene TH.

The protein resides in the nucleus. Functionally, may control regulatory pathways relevant to schizophrenia and to psychotic illness. May play a role in late central nervous system development by modulating EPO expression in response to cellular oxygen level. Forms a heterodimer that binds core DNA sequence 5'-TACGTG-3' within the hypoxia response element (HRE) leading to transcriptional repression on its target gene TH. This Homo sapiens (Human) protein is Neuronal PAS domain-containing protein 1 (NPAS1).